A 4639-amino-acid chain; its full sequence is Dynein heavy chain, cytoplasmic (4639 aa).

The segment at 1 to 1856 (MGDSLENPDT…TIHMANARFF (1856 aa)) is stem. 3 coiled-coil regions span residues 530-565 (LDITKEGSEAWEAAVKRYEEKIDRVETRITAHLRDQ), 774-794 (SLIESVRTYERTLEKIEDRAS), and 1264-1368 (DDAL…ARLR). 4 AAA regions span residues 1857–2084 (YGFE…VLIS), 2166–2437 (EEIR…FTRL), 2541–2790 (EVET…WVRG), and 2884–3153 (VFYE…GGRT). ATP contacts are provided by residues 1895–1902 (GPAGTGKT), 2210–2217 (GPSGSGKS), 2580–2587 (GPPGSGKT), and 2922–2929 (GVSGAGKT). 3 coiled-coil regions span residues 3189–3261 (GLNK…EKRK), 3382–3478 (AIAQ…WEST), and 3723–3782 (EFRL…EIET). The stalk stretch occupies residues 3189 to 3478 (GLNKIAETVE…NIERERWEST (290 aa)). AAA stretches follow at residues 3539-3768 (LSNP…DINQ) and 3989-4205 (AHNV…TLDT).

This sequence belongs to the dynein heavy chain family. As to quaternary structure, consists of at least two heavy chains and a number of intermediate and light chains.

It localises to the cytoplasm. Its subcellular location is the cytoskeleton. Functionally, cytoplasmic dynein acts as a motor for the intracellular retrograde motility of vesicles and organelles along microtubules. Dynein has ATPase activity; the force-producing power stroke is thought to occur on release of ADP. The sequence is that of Dynein heavy chain, cytoplasmic (Dhc64C) from Drosophila melanogaster (Fruit fly).